We begin with the raw amino-acid sequence, 351 residues long: Anthranilate phosphoribosyltransferase (351 aa).

Residues Gly85, 88-89 (GD), Ser93, 95-98 (NIST), 113-121 (KHGNRAASS), and Thr125 each bind 5-phospho-alpha-D-ribose 1-diphosphate. An anthranilate-binding site is contributed by Gly85. Ser97 contributes to the Mg(2+) binding site. Residue Asn116 coordinates anthranilate. Arg171 serves as a coordination point for anthranilate. The Mg(2+) site is built by Asp229 and Glu230.

The protein belongs to the anthranilate phosphoribosyltransferase family. Homodimer. Requires Mg(2+) as cofactor.

The catalysed reaction is N-(5-phospho-beta-D-ribosyl)anthranilate + diphosphate = 5-phospho-alpha-D-ribose 1-diphosphate + anthranilate. It functions in the pathway amino-acid biosynthesis; L-tryptophan biosynthesis; L-tryptophan from chorismate: step 2/5. Functionally, catalyzes the transfer of the phosphoribosyl group of 5-phosphorylribose-1-pyrophosphate (PRPP) to anthranilate to yield N-(5'-phosphoribosyl)-anthranilate (PRA). This Saccharopolyspora erythraea (strain ATCC 11635 / DSM 40517 / JCM 4748 / NBRC 13426 / NCIMB 8594 / NRRL 2338) protein is Anthranilate phosphoribosyltransferase.